The primary structure comprises 139 residues: Putative nickel-responsive regulator (139 aa).

Histidine 79, histidine 90, histidine 92, and cysteine 98 together coordinate Ni(2+).

It belongs to the transcriptional regulatory CopG/NikR family. The cofactor is Ni(2+).

Its function is as follows. Transcriptional regulator. This is Putative nickel-responsive regulator from Solidesulfovibrio magneticus (strain ATCC 700980 / DSM 13731 / RS-1) (Desulfovibrio magneticus).